The following is a 499-amino-acid chain: Na(+)/H(+) antiporter NhaB (499 aa).

11 helical membrane-spanning segments follow: residues 33–53, 66–86, 89–109, 128–148, 237–257, 305–325, 326–346, 349–369, 393–413, 449–469, and 477–497; these read PVIF…EFIF, PGGL…HTVY, VSGN…IYFM, AILS…LDAL, FIEF…AGLI, AIVA…VGLI, GLTV…HQIG, FEEA…VGVI, MFFI…VATV, ATPN…APLI, and VWMA…MIVI.

Belongs to the NhaB Na(+)/H(+) (TC 2.A.34) antiporter family.

Its subcellular location is the cell inner membrane. It catalyses the reaction 2 Na(+)(in) + 3 H(+)(out) = 2 Na(+)(out) + 3 H(+)(in). Its function is as follows. Na(+)/H(+) antiporter that extrudes sodium in exchange for external protons. The protein is Na(+)/H(+) antiporter NhaB of Hahella chejuensis (strain KCTC 2396).